A 311-amino-acid polypeptide reads, in one-letter code: Serine/threonine-protein phosphatase PP1-1 (311 aa).

Residues D53, H55, D82, and N114 each contribute to the Mn(2+) site. Residue H115 is the Proton donor of the active site. Residues H164 and H238 each coordinate Mn(2+).

It belongs to the PPP phosphatase family. PP-6 (PP-V) subfamily. In terms of assembly, inactivated in a complex with phosphatase methylesterase PPE1 (PP2Ai). Interacts with phosphatase 2A activator RRD1, which can reactivate PP2Ai by dissociating the catalytic subunit from the complex. Forms a ternary complex with RRD1-TAP42. Requires Mn(2+) as cofactor.

The protein resides in the cytoplasm. It catalyses the reaction O-phospho-L-seryl-[protein] + H2O = L-seryl-[protein] + phosphate. The enzyme catalyses O-phospho-L-threonyl-[protein] + H2O = L-threonyl-[protein] + phosphate. Involved in the dephosphorylation of the large subunit of RNA polymerase II. Is required in late G1 for normal G1 cyclin expression, bud initiation and expression of certain genes that are periodically expressed during late G1. Associates with the SAP proteins in a cell cycle-dependent manner. The protein is Serine/threonine-protein phosphatase PP1-1 (SIT4) of Saccharomyces cerevisiae (strain ATCC 204508 / S288c) (Baker's yeast).